Consider the following 200-residue polypeptide: Small ribosomal subunit protein uS4 (200 aa).

The segment at 22–42 (TGKELEKRPYAPGPHGPNQRK) is disordered. Residues 92-152 (ARLDNLVYRM…EKSNSLVVVK (61 aa)) form the S4 RNA-binding domain.

This sequence belongs to the universal ribosomal protein uS4 family. In terms of assembly, part of the 30S ribosomal subunit. Contacts protein S5. The interaction surface between S4 and S5 is involved in control of translational fidelity.

In terms of biological role, one of the primary rRNA binding proteins, it binds directly to 16S rRNA where it nucleates assembly of the body of the 30S subunit. Its function is as follows. With S5 and S12 plays an important role in translational accuracy. The polypeptide is Small ribosomal subunit protein uS4 (Bacillus cereus (strain B4264)).